We begin with the raw amino-acid sequence, 1406 residues long: EF-hand calcium-binding domain-containing protein 5 (1406 aa).

Positions 255–655 (NKDLPQQQRD…KACEPKPQHV (401 aa)) are disordered. Polar residues-rich tracts occupy residues 258–294 (LPQQ…SLTG), 322–334 (RRSS…QQRG), 342–354 (RRSS…QQRG), 362–373 (RRSSTVEQTRQR), 382–393 (RRSSTVEQTQRR), 402–414 (RRSS…QQRG), 422–434 (RRSS…QQRG), and 442–464 (RRSS…SLPE). The segment covering 465–477 (QESHRGSITEGSH) has biased composition (basic and acidic residues). The segment covering 501–513 (DDSGSAGSRRGSG) has biased composition (low complexity). Residues 564–577 (QELDEDSTPQLEDD) show a composition bias toward acidic residues. Basic and acidic residues-rich tracts occupy residues 578–598 (SALK…EEKP) and 638–655 (SKRD…PQHV). Residues 773–808 (RRRILLQAIFEKWDNDGSGFLDLNEVDDLLYTYKEG) enclose the EF-hand domain. Ca(2+)-binding residues include Asp-786, Asp-788, Ser-790, and Glu-797.

The polypeptide is EF-hand calcium-binding domain-containing protein 5 (Efcab5) (Mus musculus (Mouse)).